A 1280-amino-acid chain; its full sequence is Papilin (1280 aa).

The signal sequence occupies residues 1–20 (MQLFPLLFSLLLTSTPGSWA). TSP type-1 domains follow at residues 27–81 (SDTW…ESCP), 305–362 (RGFS…QPCP), 363–422 (KTKR…ACNL), 424–482 (HCAV…EACP), and 485–540 (RGQA…QPCH). Disulfide bonds link Cys-39–Cys-75, Cys-43–Cys-80, and Cys-54–Cys-65. 3 cysteine pairs are disulfide-bonded: Cys-425–Cys-464, Cys-436–Cys-476, and Cys-440–Cys-481. Disordered stretches follow at residues 541–626 (LPQE…DCRH) and 672–715 (PQQA…PSEC). A compositionally biased stretch (polar residues) spans 585–599 (AQSNPREGQDPNLSS). A compositionally biased stretch (basic and acidic residues) spans 706 to 715 (QAHEGEPSEC). 3 disulfides stabilise this stretch: Cys-750–Cys-800, Cys-759–Cys-783, and Cys-775–Cys-796. Residues 750-800 (CLLPSAQGSCGDWAARWYFVASVGRCNRFWYGGCHGNANNFASEQECMNTC) enclose the BPTI/Kunitz inhibitor domain. The segment at 800-902 (CRGQHGPRRP…AVPPTHSPSY (103 aa)) is disordered. Residues 879–891 (IRPRVPGLDREAR) are compositionally biased toward basic and acidic residues. The 91-residue stretch at 900 to 990 (PSYRIRLAGS…EPQEIQLRVT (91 aa)) folds into the Ig-like C2-type 1 domain. Cysteines 926 and 973 form a disulfide. Over residues 1002 to 1012 (PRHFPEPRNPD) the composition is skewed to basic and acidic residues. A disordered region spans residues 1002-1042 (PRHFPEPRNPDLGHGPPHRGTGAEAGGHRVLSPSHPRPATR). 2 consecutive Ig-like C2-type domains span residues 1039–1128 (PATR…VQLR) and 1133–1218 (LTIT…TEVK). 2 disulfide bridges follow: Cys-1065–Cys-1112 and Cys-1154–Cys-1202. Residues 1231–1270 (LGKDCIDQPELANCALILQAQLCGNEYYSSFCCASCSRFQ) form the PLAC domain.

It belongs to the papilin family.

It localises to the secreted. In Mus musculus (Mouse), this protein is Papilin (Papln).